The following is a 369-amino-acid chain: Protein RecA (369 aa).

Residue 66–73 (GPESSGKT) participates in ATP binding. A disordered region spans residues 328–369 (GIDAESLEEKEDPEKVKEQRAKKAAPGEEKPAEPASPEKTDK). The span at 339–369 (DPEKVKEQRAKKAAPGEEKPAEPASPEKTDK) shows a compositional bias: basic and acidic residues.

Belongs to the RecA family.

Its subcellular location is the cytoplasm. Can catalyze the hydrolysis of ATP in the presence of single-stranded DNA, the ATP-dependent uptake of single-stranded DNA by duplex DNA, and the ATP-dependent hybridization of homologous single-stranded DNAs. It interacts with LexA causing its activation and leading to its autocatalytic cleavage. The polypeptide is Protein RecA (Lactobacillus delbrueckii subsp. bulgaricus (strain ATCC BAA-365 / Lb-18)).